The chain runs to 66 residues: DNA-directed RNA polymerase subunit omega (66 aa).

The protein belongs to the RNA polymerase subunit omega family. As to quaternary structure, the RNAP catalytic core consists of 2 alpha, 1 beta, 1 beta' and 1 omega subunit. When a sigma factor is associated with the core the holoenzyme is formed, which can initiate transcription.

The catalysed reaction is RNA(n) + a ribonucleoside 5'-triphosphate = RNA(n+1) + diphosphate. Functionally, promotes RNA polymerase assembly. Latches the N- and C-terminal regions of the beta' subunit thereby facilitating its interaction with the beta and alpha subunits. The chain is DNA-directed RNA polymerase subunit omega from Clostridium botulinum (strain Eklund 17B / Type B).